We begin with the raw amino-acid sequence, 155 residues long: Ribosomal RNA large subunit methyltransferase H (155 aa).

Residues Leu-72, Gly-103, and 122–127 (LGRMVW) contribute to the S-adenosyl-L-methionine site.

It belongs to the RNA methyltransferase RlmH family. Homodimer.

The protein localises to the cytoplasm. The enzyme catalyses pseudouridine(1915) in 23S rRNA + S-adenosyl-L-methionine = N(3)-methylpseudouridine(1915) in 23S rRNA + S-adenosyl-L-homocysteine + H(+). Specifically methylates the pseudouridine at position 1915 (m3Psi1915) in 23S rRNA. The chain is Ribosomal RNA large subunit methyltransferase H from Cereibacter sphaeroides (strain ATCC 17029 / ATH 2.4.9) (Rhodobacter sphaeroides).